The following is a 102-amino-acid chain: Probable non-specific lipid-transfer protein (102 aa).

The signal sequence occupies residues 1–35 (MAMAMGMAMRKEAAVAVMMVMVVTLAAGADAGAGA). Disulfide bonds link cysteine 37/cysteine 71, cysteine 45/cysteine 59, cysteine 60/cysteine 95, and cysteine 69/cysteine 102.

This sequence belongs to the plant LTP family. B11E subfamily. Aleurone.

In terms of biological role, potential phospholipid transfer protein. This is Probable non-specific lipid-transfer protein (LTP2) from Hordeum vulgare (Barley).